An 83-amino-acid chain; its full sequence is Small ribosomal subunit protein bS18 (83 aa).

The tract at residues 1–23 (MKQRNNAKRVRLEQTRRPKKNPL) is disordered.

This sequence belongs to the bacterial ribosomal protein bS18 family. As to quaternary structure, part of the 30S ribosomal subunit. Forms a tight heterodimer with protein bS6.

Its function is as follows. Binds as a heterodimer with protein bS6 to the central domain of the 16S rRNA, where it helps stabilize the platform of the 30S subunit. This Corynebacterium efficiens (strain DSM 44549 / YS-314 / AJ 12310 / JCM 11189 / NBRC 100395) protein is Small ribosomal subunit protein bS18.